We begin with the raw amino-acid sequence, 1382 residues long: Hepatocyte growth factor receptor (1382 aa).

A signal peptide spans 1 to 24 (MKAPAVLAPGVLVLLFTLVRKSHG). The Extracellular portion of the chain corresponds to 25–935 (ECEEALAKSK…VQPDQNFTGL (911 aa)). The Sema domain maps to 27 to 516 (EEALAKSKMN…TGKKITKIPL (490 aa)). N-linked (GlcNAc...) asparagine glycosylation is present at asparagine 45. 4 disulfides stabilise this stretch: cysteine 95/cysteine 101, cysteine 98/cysteine 160, cysteine 133/cysteine 141, and cysteine 173/cysteine 176. The N-linked (GlcNAc...) asparagine glycan is linked to asparagine 106. Asparagine 203 and asparagine 359 each carry an N-linked (GlcNAc...) asparagine glycan. 2 disulfide bridges follow: cysteine 299–cysteine 364 and cysteine 386–cysteine 398. N-linked (GlcNAc...) asparagine glycosylation is found at asparagine 400, asparagine 406, and asparagine 450. 4 disulfides stabilise this stretch: cysteine 521-cysteine 539, cysteine 527-cysteine 562, cysteine 530-cysteine 546, and cysteine 542-cysteine 552. IPT/TIG domains lie at 564–656 (PTIY…FSYV), 658–740 (PVIT…FSYQ), and 743–837 (PTVY…LIYV). Threonine 583 carries O-linked (Man) threonine glycosylation. Asparagine 608 and asparagine 636 each carry an N-linked (GlcNAc...) asparagine glycan. The O-linked (Man) threonine glycan is linked to threonine 677. N-linked (GlcNAc...) asparagine glycosylation is present at asparagine 751. Threonine 762 carries an O-linked (Man) threonine glycan. Residues asparagine 786, asparagine 880, and asparagine 931 are each glycosylated (N-linked (GlcNAc...) asparagine). The helical transmembrane segment at 936–956 (IVGVVSISIILLLLLGLFLWL) threads the bilayer. At 957–1382 (KKRKQIKDLG…QDSVDDEVDT (426 aa)) the chain is on the cytoplasmic side. Serine 967 carries the phosphoserine modification. Threonine 978 bears the Phosphothreonine mark. Serine 991, serine 998, and serine 1001 each carry phosphoserine. Tyrosine 1004 is modified (phosphotyrosine). One can recognise a Protein kinase domain in the interval 1079-1346 (VHFNEVIGRG…RISAIFSTFI (268 aa)). ATP is bound by residues 1085-1093 (IGRGHFGCV) and lysine 1111. Residue aspartate 1205 is the Proton acceptor of the active site. Residues 1213–1382 (LDEKFTVKVA…QDSVDDEVDT (170 aa)) form an interaction with RANBP9 region. At tyrosine 1231 the chain carries Phosphotyrosine. Residues tyrosine 1235 and tyrosine 1236 each carry the phosphotyrosine; by autocatalysis modification. Threonine 1290 is subject to Phosphothreonine. The tract at residues 1321–1360 (WHPKAEMRPSFSELVSRISAIFSTFIGEHYVHVNTTYVNV) is interaction with MUC20. Phosphotyrosine; by autocatalysis is present on residues tyrosine 1350 and tyrosine 1357. The residue at position 1366 (tyrosine 1366) is a Phosphotyrosine.

The protein belongs to the protein kinase superfamily. Tyr protein kinase family. As to quaternary structure, heterodimer made of an alpha chain (50 kDa) and a beta chain (145 kDa) which are disulfide linked. Binds PLXNB1. Interacts when phosphorylated with downstream effectors including STAT3, PIK3R1, SRC, PCLG1, GRB2 and GAB1. Interacts with SPSB1, SPSB2 and SPSB4. Interacts with INPP5D/SHIP1. When phosphorylated at Tyr-1357, interacts with INPPL1/SHIP2. Interacts with RANBP9 and RANBP10, as well as SPSB1, SPSB2, SPSB3 and SPSB4. SPSB1 binding occurs in the presence and in the absence of HGF, however HGF treatment has a positive effect on this interaction. Interacts with MUC20; prevents interaction with GRB2 and suppresses hepatocyte growth factor-induced cell proliferation. Interacts with GRB10. Interacts with PTPN1 and PTPN2. Interacts with HSP90AA1 and HSP90AB1; the interaction suppresses MET kinase activity. Interacts with tensin TNS3. Interacts (when phosphorylated) with tensin TNS4 (via SH2 domain); the interaction increases MET protein stability by inhibiting MET endocytosis and subsequent lysosomal degradation. Post-translationally, autophosphorylated in response to ligand binding on Tyr-1235 and Tyr-1236 in the kinase domain leading to further phosphorylation of Tyr-1350 and Tyr-1357 in the C-terminal multifunctional docking site. Dephosphorylated by PTPRJ at Tyr-1350 and Tyr-1366. Dephosphorylated by PTPN1 and PTPN2. In terms of processing, ubiquitinated. Ubiquitination by CBL regulates the receptor stability and activity through proteasomal degradation. O-mannosylation of IPT/TIG domains by TMEM260 is required for protein maturation. O-mannosylated residues are composed of single mannose glycans that are not elongated or modified.

It is found in the membrane. It catalyses the reaction L-tyrosyl-[protein] + ATP = O-phospho-L-tyrosyl-[protein] + ADP + H(+). With respect to regulation, in its inactive state, the C-terminal tail interacts with the catalytic domain and inhibits the kinase activity. Upon ligand binding, the C-terminal tail is displaced and becomes phosphorylated, thus increasing the kinase activity. In terms of biological role, receptor tyrosine kinase that transduces signals from the extracellular matrix into the cytoplasm by binding to hepatocyte growth factor/HGF ligand. Regulates many physiological processes including proliferation, scattering, morphogenesis and survival. Ligand binding at the cell surface induces autophosphorylation of MET on its intracellular domain that provides docking sites for downstream signaling molecules. Following activation by ligand, interacts with the PI3-kinase subunit PIK3R1, PLCG1, SRC, GRB2, STAT3 or the adapter GAB1. Recruitment of these downstream effectors by MET leads to the activation of several signaling cascades including the RAS-ERK, PI3 kinase-AKT, or PLCgamma-PKC. The RAS-ERK activation is associated with the morphogenetic effects while PI3K/AKT coordinates prosurvival effects. During embryonic development, MET signaling plays a role in gastrulation, development and migration of muscles and neuronal precursors, angiogenesis and kidney formation. In adults, participates in wound healing as well as organ regeneration and tissue remodeling. Also promotes differentiation and proliferation of hematopoietic cells. The polypeptide is Hepatocyte growth factor receptor (MET) (Loxodonta africana (African elephant)).